The sequence spans 348 residues: UDP-glucose 4-epimerase (348 aa).

NAD(+)-binding positions include glycine 12–isoleucine 14, aspartate 33–asparagine 37, aspartate 66–isoleucine 67, phenylalanine 88, and lysine 92. Serine 132 to threonine 134 serves as a coordination point for substrate. The active-site Proton acceptor is tyrosine 157. Residues lysine 161 and tyrosine 185 each contribute to the NAD(+) site. Residues tyrosine 185–asparagine 187, asparagine 206–leucine 208, asparagine 224–phenylalanine 226, arginine 239, and arginine 300–aspartate 303 contribute to the substrate site.

Belongs to the NAD(P)-dependent epimerase/dehydratase family. In terms of assembly, homodimer. NAD(+) is required as a cofactor.

The catalysed reaction is UDP-alpha-D-glucose = UDP-alpha-D-galactose. The enzyme catalyses UDP-N-acetyl-alpha-D-glucosamine = UDP-N-acetyl-alpha-D-galactosamine. It participates in carbohydrate metabolism; galactose metabolism. Its function is as follows. Catalyzes two distinct but analogous reactions: the reversible epimerization of UDP-glucose to UDP-galactose and the reversible epimerization of UDP-N-acetylglucosamine to UDP-N-acetylgalactosamine. The reaction with UDP-Gal plays a critical role in the Leloir pathway of galactose catabolism in which galactose is converted to the glycolytic intermediate glucose 6-phosphate. It contributes to the catabolism of dietary galactose and enables the endogenous biosynthesis of both UDP-Gal and UDP-GalNAc when exogenous sources are limited. Both UDP-sugar interconversions are important in the synthesis of glycoproteins and glycolipids. The polypeptide is UDP-glucose 4-epimerase (GALE) (Pongo abelii (Sumatran orangutan)).